A 116-amino-acid chain; its full sequence is Large ribosomal subunit protein bL19 (116 aa).

The protein belongs to the bacterial ribosomal protein bL19 family.

Its function is as follows. This protein is located at the 30S-50S ribosomal subunit interface and may play a role in the structure and function of the aminoacyl-tRNA binding site. This chain is Large ribosomal subunit protein bL19, found in Stutzerimonas stutzeri (strain A1501) (Pseudomonas stutzeri).